The primary structure comprises 211 residues: ATP-dependent Clp protease proteolytic subunit 1 (211 aa).

The active-site Nucleophile is the S107. H132 is a catalytic residue.

The protein belongs to the peptidase S14 family. In terms of assembly, fourteen ClpP subunits assemble into 2 heptameric rings which stack back to back to give a disk-like structure with a central cavity, resembling the structure of eukaryotic proteasomes.

The protein resides in the cytoplasm. The enzyme catalyses Hydrolysis of proteins to small peptides in the presence of ATP and magnesium. alpha-casein is the usual test substrate. In the absence of ATP, only oligopeptides shorter than five residues are hydrolyzed (such as succinyl-Leu-Tyr-|-NHMec, and Leu-Tyr-Leu-|-Tyr-Trp, in which cleavage of the -Tyr-|-Leu- and -Tyr-|-Trp bonds also occurs).. Its function is as follows. Cleaves peptides in various proteins in a process that requires ATP hydrolysis. Has a chymotrypsin-like activity. Plays a major role in the degradation of misfolded proteins. In Mycolicibacterium paratuberculosis (strain ATCC BAA-968 / K-10) (Mycobacterium paratuberculosis), this protein is ATP-dependent Clp protease proteolytic subunit 1.